We begin with the raw amino-acid sequence, 179 residues long: Segregation and condensation protein B (179 aa).

Belongs to the ScpB family. Homodimer. Homodimerization may be required to stabilize the binding of ScpA to the Smc head domains. Component of a cohesin-like complex composed of ScpA, ScpB and the Smc homodimer, in which ScpA and ScpB bind to the head domain of Smc. The presence of the three proteins is required for the association of the complex with DNA.

The protein resides in the cytoplasm. Participates in chromosomal partition during cell division. May act via the formation of a condensin-like complex containing Smc and ScpA that pull DNA away from mid-cell into both cell halves. In Clostridioides difficile (strain 630) (Peptoclostridium difficile), this protein is Segregation and condensation protein B.